Here is a 215-residue protein sequence, read N- to C-terminus: Large ribosomal subunit protein uL4 (215 aa).

Residues 43 to 100 (AAKRQGTHSTKTRGEVSGGGKKPYRQKGSGRARQGSTRAPQFTGGGTVHGPKPRDYSQ) form a disordered region.

Belongs to the universal ribosomal protein uL4 family. Part of the 50S ribosomal subunit.

In terms of biological role, one of the primary rRNA binding proteins, this protein initially binds near the 5'-end of the 23S rRNA. It is important during the early stages of 50S assembly. It makes multiple contacts with different domains of the 23S rRNA in the assembled 50S subunit and ribosome. Forms part of the polypeptide exit tunnel. The chain is Large ribosomal subunit protein uL4 from Mycolicibacterium smegmatis (Mycobacterium smegmatis).